The following is a 907-amino-acid chain: Putative pentatricopeptide repeat-containing protein At5g59900 (907 aa).

PPR repeat units follow at residues 103 to 137 (STAS…ALKP), 155 to 185 (SSSS…MITK), 191 to 225 (EVRT…GIRP), 226 to 260 (DVYI…GCDV), 261 to 295 (NIVP…DLKP), 296 to 330 (DVVT…RFSP), 331 to 365 (SEAA…GVSP), 366 to 400 (NLFV…GLRP), 401 to 435 (NDVT…GLKL), 436 to 470 (SVYP…KLEP), 471 to 505 (TVVT…GIAP), 506 to 540 (SIYT…NVKP), 541 to 575 (NRVT…GIVP), 576 to 610 (DTYS…NCEL), 611 to 645 (NEIC…GVDL), 646 to 680 (DLVC…GLKP), 681 to 715 (DDVI…GCVP), 716 to 750 (NEVT…SSVP), 751 to 782 (NQVT…ILKG), 786 to 820 (NTAT…GVSP), 821 to 855 (DCIT…GIRP), and 856 to 890 (DRVA…GLIP). Residues 887 to 907 (GLIPNNKTSRTTTSNDTSSKS) are disordered. Low complexity predominate over residues 891–907 (NNKTSRTTTSNDTSSKS).

It belongs to the PPR family. P subfamily.

The polypeptide is Putative pentatricopeptide repeat-containing protein At5g59900 (Arabidopsis thaliana (Mouse-ear cress)).